Reading from the N-terminus, the 426-residue chain is 3-phosphoshikimate 1-carboxyvinyltransferase (426 aa).

K22, S23, and R27 together coordinate 3-phosphoshikimate. K22 serves as a coordination point for phosphoenolpyruvate. Phosphoenolpyruvate contacts are provided by G96 and R124. S170, S171, Q172, S198, D314, N337, and K341 together coordinate 3-phosphoshikimate. Q172 serves as a coordination point for phosphoenolpyruvate. The Proton acceptor role is filled by D314. Phosphoenolpyruvate contacts are provided by R345, R387, and K412.

It belongs to the EPSP synthase family. As to quaternary structure, monomer.

It localises to the cytoplasm. It carries out the reaction 3-phosphoshikimate + phosphoenolpyruvate = 5-O-(1-carboxyvinyl)-3-phosphoshikimate + phosphate. It participates in metabolic intermediate biosynthesis; chorismate biosynthesis; chorismate from D-erythrose 4-phosphate and phosphoenolpyruvate: step 6/7. Its function is as follows. Catalyzes the transfer of the enolpyruvyl moiety of phosphoenolpyruvate (PEP) to the 5-hydroxyl of shikimate-3-phosphate (S3P) to produce enolpyruvyl shikimate-3-phosphate and inorganic phosphate. The chain is 3-phosphoshikimate 1-carboxyvinyltransferase from Shewanella sp. (strain ANA-3).